A 129-amino-acid chain; its full sequence is Small ribosomal subunit protein uS11 (129 aa).

The protein belongs to the universal ribosomal protein uS11 family. Part of the 30S ribosomal subunit. Interacts with proteins S7 and S18. Binds to IF-3.

Functionally, located on the platform of the 30S subunit, it bridges several disparate RNA helices of the 16S rRNA. Forms part of the Shine-Dalgarno cleft in the 70S ribosome. The protein is Small ribosomal subunit protein uS11 of Staphylococcus carnosus (strain TM300).